The sequence spans 132 residues: Ribosome-binding factor A (132 aa).

Belongs to the RbfA family. In terms of assembly, monomer. Binds 30S ribosomal subunits, but not 50S ribosomal subunits or 70S ribosomes.

The protein localises to the cytoplasm. In terms of biological role, one of several proteins that assist in the late maturation steps of the functional core of the 30S ribosomal subunit. Associates with free 30S ribosomal subunits (but not with 30S subunits that are part of 70S ribosomes or polysomes). Required for efficient processing of 16S rRNA. May interact with the 5'-terminal helix region of 16S rRNA. The chain is Ribosome-binding factor A from Prochlorococcus marinus (strain MIT 9515).